We begin with the raw amino-acid sequence, 783 residues long: BMP/retinoic acid-inducible neural-specific protein 2 (783 aa).

An N-terminal signal peptide occupies residues 1 to 33; the sequence is MRWPCSSRFRGLWPEAAPWAVLLALGVPGWVLA. One can recognise an MACPF domain in the interval 85–281; that stretch reads RYRIYREFAR…FVAAALSYIT (197 aa). 6 N-linked (GlcNAc...) asparagine glycosylation sites follow: N185, N354, N473, N579, N626, and N658.

It belongs to the BRINP family. As to expression, expressed in olfactory bulb, cerebellum and neuronal layers in hippocampus.

Its subcellular location is the secreted. Inhibits neuronal cell proliferation by negative regulation of the cell cycle transition. This is BMP/retinoic acid-inducible neural-specific protein 2 (Brinp2) from Rattus norvegicus (Rat).